The following is a 261-amino-acid chain: Imidazole glycerol phosphate synthase subunit HisF (261 aa).

Residues Asp-16 and Asp-135 contribute to the active site.

The protein belongs to the HisA/HisF family. In terms of assembly, heterodimer of HisH and HisF.

It is found in the cytoplasm. The enzyme catalyses 5-[(5-phospho-1-deoxy-D-ribulos-1-ylimino)methylamino]-1-(5-phospho-beta-D-ribosyl)imidazole-4-carboxamide + L-glutamine = D-erythro-1-(imidazol-4-yl)glycerol 3-phosphate + 5-amino-1-(5-phospho-beta-D-ribosyl)imidazole-4-carboxamide + L-glutamate + H(+). The protein operates within amino-acid biosynthesis; L-histidine biosynthesis; L-histidine from 5-phospho-alpha-D-ribose 1-diphosphate: step 5/9. In terms of biological role, IGPS catalyzes the conversion of PRFAR and glutamine to IGP, AICAR and glutamate. The HisF subunit catalyzes the cyclization activity that produces IGP and AICAR from PRFAR using the ammonia provided by the HisH subunit. The chain is Imidazole glycerol phosphate synthase subunit HisF from Mycobacterium leprae (strain Br4923).